The primary structure comprises 378 residues: MKFPEFKDYYQQLISTSSISSTDSSWDEGNAEVINKLAQWCEDLGCEVEIEEIEKGKLNLLAKLGSGEGGLLLAGHTDTVPYDEGRWNYEPHALTEANDRFYGLGTADMKGFFAFILEAIKNINWKDQSKPLYILATCDEETTMLGARHFASNTKIQPDYCIIGEPTSLKPIRGHKGHVANAIRVTGKSGHSSDPAHGVNALEIMNEIMFALMTLKNKLVKEYHNPGFSIPYPTLNLGHIHGGDSPNRICGCCELHYDVRPLPGISLDGLDNMLRDALKEIEAKWPGRIDITPLHEPIPGYECSADSPIVTSTADICGQDVETVNYCTEAPFLQDLCPTLVLGPGSIEQAHQPDEYLAFSFIDPTISILSKLMYKHCF.

H76 provides a ligand contact to Zn(2+). D78 is an active-site residue. D108 is a binding site for Zn(2+). E140 is a catalytic residue. Zn(2+) is bound by residues E141, E165, and H351.

Belongs to the peptidase M20A family. ArgE subfamily. In terms of assembly, homodimer. Zn(2+) is required as a cofactor. Requires Co(2+) as cofactor. The cofactor is glutathione.

The protein localises to the cytoplasm. The enzyme catalyses N(2)-acetyl-L-ornithine + H2O = L-ornithine + acetate. Its pathway is amino-acid biosynthesis; L-arginine biosynthesis; L-ornithine from N(2)-acetyl-L-ornithine (linear): step 1/1. Catalyzes the hydrolysis of the amide bond of N(2)-acetylated L-amino acids. Cleaves the acetyl group from N-acetyl-L-ornithine to form L-ornithine, an intermediate in L-arginine biosynthesis pathway, and a branchpoint in the synthesis of polyamines. This is Acetylornithine deacetylase from Aliivibrio fischeri (strain ATCC 700601 / ES114) (Vibrio fischeri).